The chain runs to 217 residues: 3,4-dihydroxy-2-butanone 4-phosphate synthase (217 aa).

D-ribulose 5-phosphate is bound by residues 37 to 38 (RE), Asp42, 150 to 154 (RRGHT), and Glu174. A Mg(2+)-binding site is contributed by Glu38. His153 contacts Mg(2+).

It belongs to the DHBP synthase family. In terms of assembly, homodimer. Mg(2+) is required as a cofactor. It depends on Mn(2+) as a cofactor.

It carries out the reaction D-ribulose 5-phosphate = (2S)-2-hydroxy-3-oxobutyl phosphate + formate + H(+). It participates in cofactor biosynthesis; riboflavin biosynthesis; 2-hydroxy-3-oxobutyl phosphate from D-ribulose 5-phosphate: step 1/1. In terms of biological role, catalyzes the conversion of D-ribulose 5-phosphate to formate and 3,4-dihydroxy-2-butanone 4-phosphate. The polypeptide is 3,4-dihydroxy-2-butanone 4-phosphate synthase (Syntrophotalea carbinolica (strain DSM 2380 / NBRC 103641 / GraBd1) (Pelobacter carbinolicus)).